We begin with the raw amino-acid sequence, 194 residues long: ATP-dependent Clp protease proteolytic subunit (194 aa).

Ser98 (nucleophile) is an active-site residue. Residue His123 is part of the active site.

Belongs to the peptidase S14 family. As to quaternary structure, fourteen ClpP subunits assemble into 2 heptameric rings which stack back to back to give a disk-like structure with a central cavity, resembling the structure of eukaryotic proteasomes.

The protein localises to the cytoplasm. The catalysed reaction is Hydrolysis of proteins to small peptides in the presence of ATP and magnesium. alpha-casein is the usual test substrate. In the absence of ATP, only oligopeptides shorter than five residues are hydrolyzed (such as succinyl-Leu-Tyr-|-NHMec, and Leu-Tyr-Leu-|-Tyr-Trp, in which cleavage of the -Tyr-|-Leu- and -Tyr-|-Trp bonds also occurs).. In terms of biological role, cleaves peptides in various proteins in a process that requires ATP hydrolysis. Has a chymotrypsin-like activity. Plays a major role in the degradation of misfolded proteins. This chain is ATP-dependent Clp protease proteolytic subunit, found in Clostridium botulinum (strain Loch Maree / Type A3).